The following is a 249-amino-acid chain: Flavodoxin/ferredoxin--NADP reductase (249 aa).

In terms of domain architecture, FAD-binding FR-type spans 2–102 (NTWITAKIIK…KKSYGFFTLN (101 aa)). Residues 51-54 (RAYS), Y67, 75-77 (QLT), and T117 contribute to the FAD site. Residues 144–145 (VR), 174–175 (SR), R185, and 215–217 (NPD) each bind NADP(+). 248–249 (YW) provides a ligand contact to FAD.

Belongs to the ferredoxin--NADP reductase type 1 family. It depends on FAD as a cofactor.

It is found in the cytoplasm. It carries out the reaction 2 reduced [2Fe-2S]-[ferredoxin] + NADP(+) + H(+) = 2 oxidized [2Fe-2S]-[ferredoxin] + NADPH. The enzyme catalyses reduced [flavodoxin] + NADP(+) = oxidized [flavodoxin] + NADPH + 2 H(+). Functionally, transports electrons between flavodoxin or ferredoxin and NADPH. In Buchnera aphidicola subsp. Baizongia pistaciae (strain Bp), this protein is Flavodoxin/ferredoxin--NADP reductase (fpr).